The sequence spans 175 residues: Granulocyte colony-stimulating factor (175 aa).

2 cysteine pairs are disulfide-bonded: C37-C43 and C65-C75. An O-linked (GalNAc...) threonine glycan is attached at T134.

It belongs to the IL-6 superfamily. In terms of assembly, monomer. Post-translationally, O-glycosylated.

Its subcellular location is the secreted. In terms of biological role, granulocyte/macrophage colony-stimulating factors are cytokines that act in hematopoiesis by controlling the production, differentiation, and function of 2 related white cell populations of the blood, the granulocytes and the monocytes-macrophages. This CSF induces granulocytes. This is Granulocyte colony-stimulating factor (CSF3) from Canis lupus familiaris (Dog).